The chain runs to 499 residues: Neuronal acetylcholine receptor subunit alpha-3 (499 aa).

A signal peptide spans 1-25 (MGVVLLPPPLSMLMLVLMLLPAASA). Residues 26-244 (SEAEHRLFQY…PLFYTINLII (219 aa)) lie on the Extracellular side of the membrane. Residues N49 and N166 are each glycosylated (N-linked (GlcNAc...) asparagine). Cystine bridges form between C153–C167 and C217–C218. Residues 245–260 (PCLLISFLTVLVFYLP) traverse the membrane as a helical segment. Residues 261–262 (SD) lie on the Cytoplasmic side of the membrane. Residues 263–279 (CGEKVTLCISVLLSLTV) form a helical membrane-spanning segment. E265 contributes to the Na(+) binding site. Residues 280–301 (FLLVITETIPSTSLVIPLIGEY) lie on the Extracellular side of the membrane. A helical transmembrane segment spans residues 302–320 (LLFTMIFVTLSIVITVFVL). Residues 321 to 468 (NVHYRTPTTH…QDDWKYVAMV (148 aa)) are Cytoplasmic-facing. A phosphoserine mark is found at S407 and S410. The helical transmembrane segment at 469-487 (IDRIFLWVFILVCILGTAG) threads the bilayer. The Extracellular segment spans residues 488–499 (LFLQPLMARDDT).

It belongs to the ligand-gated ion channel (TC 1.A.9) family. Acetylcholine receptor (TC 1.A.9.1) subfamily. Alpha-3/CHRNA3 sub-subfamily. Neuronal AChR is composed of two different types of subunits: alpha and beta. CHRNA3/Alpha-3 subunit can be combined to CHRNB2/beta-2 or CHRNB4/beta-4 to give rise to functional receptors. Part of a complex composed of STUB1/CHIP, VCP/p97, CHRNA3, and UBXN2A that modulates the ubiquitination and endoplasmic reticulum-associated degradation (ERAD) of CHRNA3. Within the complex UBXN2A acts as a scaffold protein required for the interaction of CHRNA3 with VCP/p97, this interaction also inhibits CHRNA3 ubiquitination by STUB1/CHIP and subsequently ERAD. Interacts with UBXN2A (via SEP domain), the interaction is required for the interaction of CHRNA3 in the STUB1:VCP:UBXN2A complex. Interacts with RIC3; which is required for proper folding and assembly. Ubiquitinated; by STUB1/CHIP and thereafter degraded by the 26S proteosome complex. Expressed in neurons. Expressed in umbrella cells of urothelium (at protein level).

The protein localises to the synaptic cell membrane. The protein resides in the cell membrane. Its subcellular location is the endoplasmic reticulum. It localises to the golgi apparatus. It catalyses the reaction Ca(2+)(in) = Ca(2+)(out). It carries out the reaction K(+)(in) = K(+)(out). The enzyme catalyses Na(+)(in) = Na(+)(out). Its activity is regulated as follows. Activated by a myriad of ligands such as acetylcholine, cytisine, nicotine, choline and epibatidine. The heteropentamer CHRNA3:CHRNB2 activity is blocked by alpha-conotoxins ImI, ImII, PnIA, GID and MII. The heteropentamer CHRNA3:CHRNB4 activity is blocked by the alpha-conotoxin ImI and AuIB. Functionally, component of neuronal acetylcholine receptors (nAChRs) that function as pentameric, ligand-gated cation channels with high calcium permeability among other activities. nAChRs are excitatory neurotrasnmitter receptors formed by a collection of nAChR subunits known to mediate synaptic transmission in the nervous system and the neuromuscular junction. Each nAchR subunit confers differential attributes to channel properties, including activation, deactivation and desensitization kinetics, pH sensitivity, cation permeability, and binding to allosteric modulators. CHRNA3 forms heteropentameric neuronal acetylcholine receptors with CHRNB2 and CHRNB4. CHRNA3:CHRNB4 being predominant in neurons of the autonomic ganglia, it is known as ganglionic nicotinic receptor. CHRNA3:CHRNB4 also plays an important role in the habenulo-interpeduncular tract, modulating the mesolimbic dopamine system and affecting reward circuits and addiction. Hypothalamic CHRNA3:CHRNB4 nAChR activation by nicotine leads to activation of POMC neurons and a decrease in food intake. Also expressed in the urothelium where it modulates reflex bladder activity by increasing intracellular calcium through extracellular influx and basal ATP release. This Rattus norvegicus (Rat) protein is Neuronal acetylcholine receptor subunit alpha-3 (Chrna3).